We begin with the raw amino-acid sequence, 264 residues long: Phosphate import ATP-binding protein PstB (264 aa).

The ABC transporter domain occupies 11 to 250 (LKAEALSVYY…DTTEKIFDSP (240 aa)). 43–50 (GPSGCGKS) contacts ATP.

It belongs to the ABC transporter superfamily. Phosphate importer (TC 3.A.1.7) family. In terms of assembly, the complex is composed of two ATP-binding proteins (PstB), two transmembrane proteins (PstC and PstA) and a solute-binding protein (PstS).

The protein resides in the cell inner membrane. It carries out the reaction phosphate(out) + ATP + H2O = ADP + 2 phosphate(in) + H(+). In terms of biological role, part of the ABC transporter complex PstSACB involved in phosphate import. Responsible for energy coupling to the transport system. In Synechococcus elongatus (strain ATCC 33912 / PCC 7942 / FACHB-805) (Anacystis nidulans R2), this protein is Phosphate import ATP-binding protein PstB.